A 131-amino-acid polypeptide reads, in one-letter code: Protein FON2 SPARE1 (131 aa).

Positions 1 to 22 are cleaved as a signal peptide; the sequence is MSRRLGAAAAVLLLWLAVLTFA. The disordered stretch occupies residues 67-131; that stretch reads SPSSLTTTDR…VPTGPNPLHH (65 aa). The span at 76–97 shows a compositional bias: basic residues; it reads RHHHHHRHHGHHHHRGHDRWNR.

Belongs to the CLV3/ESR signal peptide family. In terms of tissue distribution, expressed in all aerial apical meristems, including the floral and inflorescence meristems in the reproductive phase and the shoot apical meristem in the vegetative phase. Also detected in the primordia of lateral organs such as the leaf and the floral organs.

It localises to the secreted. Involved in the maintenance of the floral meristem and of the shoot apical meristem in the vegetative phase. Suppresses the fon2 mutation and acts independently of FON1. In Oryza sativa subsp. japonica, the protein has a single amino acid substitution at the putative processing site of the signal peptide and is inactive. The sequence is that of Protein FON2 SPARE1 (FOS1) from Oryza sativa subsp. indica (Rice).